Consider the following 255-residue polypeptide: Large ribosomal subunit protein eL8 (255 aa).

The segment covering 1-16 (MPKAPKKITKPKKAEK) has biased composition (basic residues). Residues 1 to 28 (MPKAPKKITKPKKAEKKKNPLFQAKPRS) form a disordered region.

The protein belongs to the eukaryotic ribosomal protein eL8 family.

The chain is Large ribosomal subunit protein eL8 (RPL7A) from Tetrahymena thermophila.